Reading from the N-terminus, the 152-residue chain is MTEYKKVIAQNKKAIFNYFIEEILEAGIVLKGSEVQSLRQGKASIDESYASDNGHEVFLYNCHITEYEKANRFNHSTRRPRKLLLHTKEIKKIIGKIRIKGYTLVALSMYFNKNNKVKVELGIAKGKKLYDKRATIKEKDWKKDQSRLIRQK.

This sequence belongs to the SmpB family.

It is found in the cytoplasm. In terms of biological role, required for rescue of stalled ribosomes mediated by trans-translation. Binds to transfer-messenger RNA (tmRNA), required for stable association of tmRNA with ribosomes. tmRNA and SmpB together mimic tRNA shape, replacing the anticodon stem-loop with SmpB. tmRNA is encoded by the ssrA gene; the 2 termini fold to resemble tRNA(Ala) and it encodes a 'tag peptide', a short internal open reading frame. During trans-translation Ala-aminoacylated tmRNA acts like a tRNA, entering the A-site of stalled ribosomes, displacing the stalled mRNA. The ribosome then switches to translate the ORF on the tmRNA; the nascent peptide is terminated with the 'tag peptide' encoded by the tmRNA and targeted for degradation. The ribosome is freed to recommence translation, which seems to be the essential function of trans-translation. This Rickettsia typhi (strain ATCC VR-144 / Wilmington) protein is SsrA-binding protein.